Consider the following 306-residue polypeptide: Acetylglutamate kinase (306 aa).

Substrate is bound by residues G79–G80, R101, and N203.

This sequence belongs to the acetylglutamate kinase family. ArgB subfamily.

The protein localises to the cytoplasm. It catalyses the reaction N-acetyl-L-glutamate + ATP = N-acetyl-L-glutamyl 5-phosphate + ADP. It functions in the pathway amino-acid biosynthesis; L-arginine biosynthesis; N(2)-acetyl-L-ornithine from L-glutamate: step 2/4. In terms of biological role, catalyzes the ATP-dependent phosphorylation of N-acetyl-L-glutamate. This chain is Acetylglutamate kinase, found in Polaromonas naphthalenivorans (strain CJ2).